Here is a 327-residue protein sequence, read N- to C-terminus: Phenylalanine--tRNA ligase alpha subunit (327 aa).

Glutamate 252 serves as a coordination point for Mg(2+).

It belongs to the class-II aminoacyl-tRNA synthetase family. Phe-tRNA synthetase alpha subunit type 1 subfamily. As to quaternary structure, tetramer of two alpha and two beta subunits. It depends on Mg(2+) as a cofactor.

The protein resides in the cytoplasm. It catalyses the reaction tRNA(Phe) + L-phenylalanine + ATP = L-phenylalanyl-tRNA(Phe) + AMP + diphosphate + H(+). The chain is Phenylalanine--tRNA ligase alpha subunit from Klebsiella pneumoniae subsp. pneumoniae (strain ATCC 700721 / MGH 78578).